We begin with the raw amino-acid sequence, 302 residues long: Short-chain dehydrogenase/reductase 1 (302 aa).

Residues 20–23 (NKGL), R43, 71–72 (DV), and N98 contribute to the NADP(+) site. Substrate is bound at residue S170. Residues Y226, K230, and 257 to 262 (VKTDIN) each bind NADP(+). Residue Y226 is the Proton acceptor of the active site.

It belongs to the short-chain dehydrogenases/reductases (SDR) family. Mainly expressed in flowers and flower buds, to a lesser extent in leaves and, at low levels, in stems and roots.

Its pathway is secondary metabolite biosynthesis; terpenoid biosynthesis. Its function is as follows. Component of the oleanane-type triterpene saponins (e.g. saponarioside A and saponarioside B) biosynthetic pathway, leading to the production of natural products with detergent properties used as traditional sources of soap. A dehydrogenase/reductase that, together with UGT74CD1, mediates the conversion of QA-tri to QA-triF; UGT74CD1 may transfer 4-keto-6-deoxy-glucose to QA-tri, which is in turn reduced to D-fucose by SDR1, thus leading to QA-triF formation via the initiation of the C-28 sugar chain. This Saponaria officinalis (Common soapwort) protein is Short-chain dehydrogenase/reductase 1.